The following is a 650-amino-acid chain: Acetyl-coenzyme A synthetase (650 aa).

Residues 191-194, Thr311, and Asn335 each bind CoA; that span reads RGGR. Residues 387–389, 411–416, Asp500, and Arg515 contribute to the ATP site; these read GEP and DTWWQT. Ser523 contributes to the CoA binding site. Arg526 contributes to the ATP binding site. Positions 537, 539, and 542 each coordinate Mg(2+). Arg584 lines the CoA pocket. The residue at position 609 (Lys609) is an N6-acetyllysine.

Belongs to the ATP-dependent AMP-binding enzyme family. The cofactor is Mg(2+). Acetylated. Deacetylation by the SIR2-homolog deacetylase activates the enzyme.

The catalysed reaction is acetate + ATP + CoA = acetyl-CoA + AMP + diphosphate. Functionally, catalyzes the conversion of acetate into acetyl-CoA (AcCoA), an essential intermediate at the junction of anabolic and catabolic pathways. AcsA undergoes a two-step reaction. In the first half reaction, AcsA combines acetate with ATP to form acetyl-adenylate (AcAMP) intermediate. In the second half reaction, it can then transfer the acetyl group from AcAMP to the sulfhydryl group of CoA, forming the product AcCoA. This Shewanella frigidimarina (strain NCIMB 400) protein is Acetyl-coenzyme A synthetase.